The primary structure comprises 373 residues: MPAVTFTVLKRDRSTGARLGRLTTPHGTIETPVFMPVGTQATVKTMTPEEVAGLGAEIILANTYHLYLRPGADIIREAGGLHRFMHWERPILTDSGGFQVFSLADLREISDEGVTFRSHLDGSIHFLGPAESMAVQEALGSDIAMAFDECVAYPASPEEVAAGVERTSRWAEACLRAHRREDQAVFGIIQGGTIPELRRRSAREITALDFPGYGIGGLSVGEPKELMYSILEELQGYLPENKPRYLMGVGSPDCLIEGVKRGVDMFDCVLPTRIARNGTVMTTYGKLVVRNAAYARDFRPLDPECDCYTCRNYTRAYIRHLLKAEEILGLRLTTIHNLHFLIKLMQRLRQAIAEGRLEEVAADFYERYNSGKI.

Catalysis depends on Asp94, which acts as the Proton acceptor. Residues 94–98 (DSGGF), Asp148, Gln190, and Gly217 contribute to the substrate site. Positions 248–254 (GVGSPDC) are RNA binding. Asp267 (nucleophile) is an active-site residue. The tract at residues 272 to 276 (TRIAR) is RNA binding; important for wobble base 34 recognition. Residues Cys305, Cys307, Cys310, and His336 each coordinate Zn(2+).

This sequence belongs to the queuine tRNA-ribosyltransferase family. As to quaternary structure, homodimer. Within each dimer, one monomer is responsible for RNA recognition and catalysis, while the other monomer binds to the replacement base PreQ1. Requires Zn(2+) as cofactor.

The enzyme catalyses 7-aminomethyl-7-carbaguanine + guanosine(34) in tRNA = 7-aminomethyl-7-carbaguanosine(34) in tRNA + guanine. The protein operates within tRNA modification; tRNA-queuosine biosynthesis. Functionally, catalyzes the base-exchange of a guanine (G) residue with the queuine precursor 7-aminomethyl-7-deazaguanine (PreQ1) at position 34 (anticodon wobble position) in tRNAs with GU(N) anticodons (tRNA-Asp, -Asn, -His and -Tyr). Catalysis occurs through a double-displacement mechanism. The nucleophile active site attacks the C1' of nucleotide 34 to detach the guanine base from the RNA, forming a covalent enzyme-RNA intermediate. The proton acceptor active site deprotonates the incoming PreQ1, allowing a nucleophilic attack on the C1' of the ribose to form the product. After dissociation, two additional enzymatic reactions on the tRNA convert PreQ1 to queuine (Q), resulting in the hypermodified nucleoside queuosine (7-(((4,5-cis-dihydroxy-2-cyclopenten-1-yl)amino)methyl)-7-deazaguanosine). In Moorella thermoacetica (strain ATCC 39073 / JCM 9320), this protein is Queuine tRNA-ribosyltransferase.